The primary structure comprises 138 residues: Basic phospholipase A2 Sct-N6 (138 aa).

An N-terminal signal peptide occupies residues 1-16; that stretch reads MRTFWIVAVLLVGVEG. 7 disulfides stabilise this stretch: C42–C131, C44–C60, C59–C111, C65–C138, C66–C104, C73–C97, and C91–C102. The Ca(2+) site is built by Y43, G45, and G47. H63 is an active-site residue. Residue D64 coordinates Ca(2+). D105 is an active-site residue.

Belongs to the phospholipase A2 family. Group II subfamily. D49 sub-subfamily. Ca(2+) serves as cofactor. As to expression, expressed by the venom gland.

It is found in the secreted. The catalysed reaction is a 1,2-diacyl-sn-glycero-3-phosphocholine + H2O = a 1-acyl-sn-glycero-3-phosphocholine + a fatty acid + H(+). Functionally, snake venom phospholipase A2 (PLA2) that displays edema-inducing activities, as well as presynaptic neurotoxicity and low myotoxicity. PLA2 catalyzes the calcium-dependent hydrolysis of the 2-acyl groups in 3-sn-phosphoglycerides. This chain is Basic phospholipase A2 Sct-N6, found in Sistrurus tergeminus (Western massasauga).